Reading from the N-terminus, the 318-residue chain is ZAR1-like protein (318 aa).

A disordered region spans residues 149–211 (LSDPPEAGQP…PVDSSQPLGR (63 aa)). Residues 155–169 (AGQPPPPLPPPSPPP) are compositionally biased toward pro residues. The 3CxxC-type zinc finger occupies 219–304 (PKYGYFHCKD…QELCGRCKDK (86 aa)).

It belongs to the ZAR1 family. As to quaternary structure, interacts with YBX2.

It localises to the cytoplasm. It is found in the cytoplasmic ribonucleoprotein granule. Its function is as follows. mRNA-binding protein required for maternal mRNA storage, translation and degradation during oocyte maturation. Probably promotes formation of some phase-separated membraneless compartment that stores maternal mRNAs in oocytes: acts by undergoing liquid-liquid phase separation upon binding to maternal mRNAs. Binds to the 3'-UTR of maternal mRNAs, inhibiting their translation. This chain is ZAR1-like protein (ZAR1L), found in Bos taurus (Bovine).